The sequence spans 372 residues: Rab9 effector protein with kelch motifs (372 aa).

5 Kelch repeats span residues 49-95 (KVFI…FIPS), 100-146 (SIWV…TSSA), 151-203 (QLYV…AAGT), 204-250 (KLFI…SAVA), and 254-303 (HLYV…IIPW). The disordered stretch occupies residues 309-341 (SEKEDSNSATVNRDAEKGDSTEKGVTQGGDSQE). Positions 321-330 (RDAEKGDSTE) are enriched in basic and acidic residues. The Kelch 6 repeat unit spans residues 349–372 (LCFVFGGMNTEGEIYDDCIVTAVD).

In terms of assembly, interacts with PIKFYVE; the interaction recruits RABEPK to the endosomal membrane. Interacts with RAB9 in its GTP-bound conformation. In terms of processing, phosphorylated on Ser residues by PIKFYVE.

The protein localises to the cytoplasm. It is found in the endosome membrane. Its function is as follows. Rab9 effector required for endosome to trans-Golgi network (TGN) transport. The sequence is that of Rab9 effector protein with kelch motifs (RABEPK) from Bos taurus (Bovine).